The sequence spans 712 residues: Ferric reductase transmembrane component 6 (712 aa).

An N-terminal signal peptide occupies residues 1-17 (MHRTLLFLTWLISLTKA). Residues 18–167 (FNIKLPHTEK…HAHAYNLDIS (150 aa)) lie on the Vacuolar side of the membrane. Residues Asn89, Asn112, and Asn124 are each glycosylated (N-linked (GlcNAc...) asparagine). The chain crosses the membrane as a helical span at residues 168–188 (SVYGAYLTYYFVIVGIIAVFF). Residues 189–244 (HMSHYNGLNRALFASRFVNYIRGHFVLPTFLVDKHANHFKFLNVEVFTGLMPNSLE) lie on the Cytoplasmic side of the membrane. A helical membrane pass occupies residues 245–265 (AWIIFGYTLANIIFLSISYII). Over 266–287 (DPYNLIFNSHLSQFTRLLADRS) the chain is Vacuolar. The region spanning 287-411 (SGILAFTQFP…YCCWQHVKIF (125 aa)) is the Ferric oxidoreductase domain. The helical transmembrane segment at 288–308 (GILAFTQFPLIIIFTARNSFL) threads the bilayer. Over 309-328 (EFLTGVKFNSFISFHKWIGR) the chain is Cytoplasmic. Heme is bound by residues His323 and His337. Residues 329–349 (IMVLNATIHSLSYSLFAIINH) form a helical membrane-spanning segment. The Vacuolar portion of the chain corresponds to 350–360 (AFKISNKQLYW). The chain crosses the membrane as a helical span at residues 361–381 (KFGIASITVLCVLLVLSLGIV). The Cytoplasmic portion of the chain corresponds to 382–387 (RKRHYE). A helical transmembrane segment spans residues 388 to 408 (FFLYTHIILALLFFYCCWQHV). His393 and His407 together coordinate heme. Residues 409 to 416 (KIFNGWKE) are Vacuolar-facing. The 135-residue stretch at 412–546 (NGWKEWIVVS…EGPYGPSNLH (135 aa)) folds into the FAD-binding FR-type domain. A helical transmembrane segment spans residues 417–437 (WIVVSLLIWGLEKLFRIWNIL). Topologically, residues 438-712 (QFRFPKATLI…IEYFEEYQCW (275 aa)) are cytoplasmic. 493–499 (HPFTIID) is a binding site for FAD. NADP(+) contacts are provided by residues 538 to 541 (GPYG) and 678 to 679 (CG).

This sequence belongs to the ferric reductase (FRE) family. Requires FAD as cofactor.

Its subcellular location is the vacuole membrane. The catalysed reaction is 2 a Fe(II)-siderophore + NADP(+) + H(+) = 2 a Fe(III)-siderophore + NADPH. Functionally, metalloreductase responsible for reducing vacuolar iron and copper prior to transport into the cytosol. Catalyzes the reduction of Fe(3+) to Fe(2+) and Cu(2+) to Cu(+), respectively, which can then be transported by the respective vacuolar efflux systems to the cytosol. This Saccharomyces cerevisiae (strain ATCC 204508 / S288c) (Baker's yeast) protein is Ferric reductase transmembrane component 6 (FRE6).